The primary structure comprises 194 residues: Putative manganese efflux pump MntP (194 aa).

The next 6 membrane-spanning stretches (helical) occupy residues 3–23, 37–57, 69–89, 110–132, 147–167, and 172–192; these read PFSIVLIGFAMSTDAFAAAIG, LRAGLIFGCIEAITPVIGWVL, DHWIAFVLLGALGTHMMIAGL, LGLATTGFATSIDAMAVGVSLAF, CTFSMVTAGVMLGRALGNLIG, and ILGGLILVIVGSVILYEHLGA.

It belongs to the MntP (TC 9.B.29) family.

The protein localises to the cell inner membrane. In terms of biological role, probably functions as a manganese efflux pump. The polypeptide is Putative manganese efflux pump MntP (Xanthomonas oryzae pv. oryzae (strain MAFF 311018)).